A 97-amino-acid polypeptide reads, in one-letter code: MVFVRRPWPALTTVLLALLVCLGALVDAYPIKPEAPREDASPEELNRYYASLRHYLNLVTRQRYGKRDGPDTLLSKTFFPDGEDRPVRSRSEGPDLW.

Positions 1-28 are cleaved as a signal peptide; the sequence is MVFVRRPWPALTTVLLALLVCLGALVDA. Residue Ser41 is modified to Phosphoserine. Tyr64 is modified (tyrosine amide). The disordered stretch occupies residues 65–97; that stretch reads GKRDGPDTLLSKTFFPDGEDRPVRSRSEGPDLW. Positions 68–97 are excised as a propeptide; it reads DGPDTLLSKTFFPDGEDRPVRSRSEGPDLW. Residues 82–97 are compositionally biased toward basic and acidic residues; the sequence is GEDRPVRSRSEGPDLW.

This sequence belongs to the NPY family. The peptide YY form is cleaved at Pro-30 by the prolyl endopeptidase FAP (seprase) activity (in vitro) to generate peptide YY(3-36).

The protein resides in the secreted. Its function is as follows. This gut peptide inhibits exocrine pancreatic secretion, has a vasoconstrictory action and inhibitis jejunal and colonic mobility. The protein is Peptide YY (PYY) of Homo sapiens (Human).